Consider the following 277-residue polypeptide: Phosphatidylglycerol--prolipoprotein diacylglyceryl transferase (277 aa).

4 helical membrane-spanning segments follow: residues 15–35, 50–70, 89–109, and 112–132; these read IHVR…TFMS, IDLL…YYVI, GGIA…VFCY, and FLPP…AQVL. Arg-134 lines the a 1,2-diacyl-sn-glycero-3-phospho-(1'-sn-glycerol) pocket. 3 helical membrane-spanning segments follow: residues 174–194, 204–224, and 234–254; these read KPTF…ILSL, GEVF…VEGM, and VIRV…ILFV.

This sequence belongs to the Lgt family.

Its subcellular location is the cell membrane. The catalysed reaction is L-cysteinyl-[prolipoprotein] + a 1,2-diacyl-sn-glycero-3-phospho-(1'-sn-glycerol) = an S-1,2-diacyl-sn-glyceryl-L-cysteinyl-[prolipoprotein] + sn-glycerol 1-phosphate + H(+). The protein operates within protein modification; lipoprotein biosynthesis (diacylglyceryl transfer). Its function is as follows. Catalyzes the transfer of the diacylglyceryl group from phosphatidylglycerol to the sulfhydryl group of the N-terminal cysteine of a prolipoprotein, the first step in the formation of mature lipoproteins. This chain is Phosphatidylglycerol--prolipoprotein diacylglyceryl transferase, found in Lactobacillus delbrueckii subsp. bulgaricus (strain ATCC 11842 / DSM 20081 / BCRC 10696 / JCM 1002 / NBRC 13953 / NCIMB 11778 / NCTC 12712 / WDCM 00102 / Lb 14).